A 399-amino-acid chain; its full sequence is Keratin, type I cytoskeletal 19 (399 aa).

A head region spans residues Met-1 to Asn-78. Omega-N-methylarginine is present on Arg-7. Ser-14 and Ser-22 each carry phosphoserine. Arg-24 carries the post-translational modification Asymmetric dimethylarginine; alternate. An Omega-N-methylarginine; alternate modification is found at Arg-24. At Arg-32 the chain carries Omega-N-methylarginine. Ser-35 and Ser-40 each carry phosphoserine. Omega-N-methylarginine occurs at positions 43 and 51. Ser-57 and Ser-71 each carry phosphoserine. The segment at Glu-79–Trp-114 is coil 1A. In terms of domain architecture, IF rod spans Glu-79–Phe-390. The linker 1 stretch occupies residues Tyr-115–Thr-132. A coil 1B region spans residues Ile-133–Leu-224. Residues Lys-225–Ile-247 form a linker 12 region. The necessary for interaction with PNN stretch occupies residues Asp-243 to Tyr-389. The coil 2 stretch occupies residues Leu-248 to Gln-386. The residue at position 322 (Thr-322) is a Phosphothreonine. The tract at residues Asp-387 to Leu-399 is rod-like helical tail. Ser-394 bears the Phosphoserine mark.

The protein belongs to the intermediate filament family. Heterotetramer of two type I and two type II keratins. Interacts with PNN and the actin-binding domain of DMD.

Functionally, involved in the organization of myofibers. Together with KRT8, helps to link the contractile apparatus to dystrophin at the costameres of striated muscle. The protein is Keratin, type I cytoskeletal 19 (KRT19) of Bos taurus (Bovine).